Consider the following 155-residue polypeptide: 6,7-dimethyl-8-ribityllumazine synthase (155 aa).

5-amino-6-(D-ribitylamino)uracil-binding positions include Phe23, 57 to 59 (AFE), and 81 to 83 (AVI). 86–87 (ST) is a binding site for (2S)-2-hydroxy-3-oxobutyl phosphate. Residue His89 is the Proton donor of the active site. Residue Phe114 coordinates 5-amino-6-(D-ribitylamino)uracil. Arg128 lines the (2S)-2-hydroxy-3-oxobutyl phosphate pocket.

The protein belongs to the DMRL synthase family.

It catalyses the reaction (2S)-2-hydroxy-3-oxobutyl phosphate + 5-amino-6-(D-ribitylamino)uracil = 6,7-dimethyl-8-(1-D-ribityl)lumazine + phosphate + 2 H2O + H(+). Its pathway is cofactor biosynthesis; riboflavin biosynthesis; riboflavin from 2-hydroxy-3-oxobutyl phosphate and 5-amino-6-(D-ribitylamino)uracil: step 1/2. In terms of biological role, catalyzes the formation of 6,7-dimethyl-8-ribityllumazine by condensation of 5-amino-6-(D-ribitylamino)uracil with 3,4-dihydroxy-2-butanone 4-phosphate. This is the penultimate step in the biosynthesis of riboflavin. The polypeptide is 6,7-dimethyl-8-ribityllumazine synthase (Geobacter sulfurreducens (strain ATCC 51573 / DSM 12127 / PCA)).